The sequence spans 266 residues: tRNA dimethylallyltransferase (266 aa).

This sequence belongs to the IPP transferase family. As to quaternary structure, monomer. Mg(2+) serves as cofactor.

The enzyme catalyses adenosine(37) in tRNA + dimethylallyl diphosphate = N(6)-dimethylallyladenosine(37) in tRNA + diphosphate. Its function is as follows. Catalyzes the transfer of a dimethylallyl group onto the adenine at position 37 in tRNAs that read codons beginning with uridine, leading to the formation of N6-(dimethylallyl)adenosine (i(6)A). This chain is tRNA dimethylallyltransferase (miaA), found in Helicobacter acinonychis (strain Sheeba).